The chain runs to 344 residues: Methionine import ATP-binding protein MetN 1 (344 aa).

Residues 2-241 enclose the ABC transporter domain; sequence IEIRNISQRF…PHHEVTRALI (240 aa). 38–45 lines the ATP pocket; that stretch reads GRSGAGKS.

It belongs to the ABC transporter superfamily. Methionine importer (TC 3.A.1.24) family. The complex is composed of two ATP-binding proteins (MetN), two transmembrane proteins (MetI) and a solute-binding protein (MetQ).

The protein localises to the cell inner membrane. The enzyme catalyses L-methionine(out) + ATP + H2O = L-methionine(in) + ADP + phosphate + H(+). The catalysed reaction is D-methionine(out) + ATP + H2O = D-methionine(in) + ADP + phosphate + H(+). In terms of biological role, part of the ABC transporter complex MetNIQ involved in methionine import. Responsible for energy coupling to the transport system. In Paraburkholderia xenovorans (strain LB400), this protein is Methionine import ATP-binding protein MetN 1.